The following is a 429-amino-acid chain: Histidine--tRNA ligase (429 aa).

Belongs to the class-II aminoacyl-tRNA synthetase family. Homodimer.

It is found in the cytoplasm. It catalyses the reaction tRNA(His) + L-histidine + ATP = L-histidyl-tRNA(His) + AMP + diphosphate + H(+). The protein is Histidine--tRNA ligase of Prochlorococcus marinus (strain MIT 9515).